Consider the following 197-residue polypeptide: Guanylate kinase (197 aa).

The region spanning 7-185 (GLIIILSSPS…TLKKIHEIIV (179 aa)) is the Guanylate kinase-like domain. Position 14-21 (14-21 (SPSGTGKS)) interacts with ATP.

Belongs to the guanylate kinase family.

The protein localises to the cytoplasm. The catalysed reaction is GMP + ATP = GDP + ADP. Its function is as follows. Essential for recycling GMP and indirectly, cGMP. This is Guanylate kinase (gmk) from Rickettsia prowazekii (strain Madrid E).